Consider the following 465-residue polypeptide: ATP synthase subunit beta (465 aa).

An ATP-binding site is contributed by 148 to 155 (GGAGVGKT).

It belongs to the ATPase alpha/beta chains family. F-type ATPases have 2 components, CF(1) - the catalytic core - and CF(0) - the membrane proton channel. CF(1) has five subunits: alpha(3), beta(3), gamma(1), delta(1), epsilon(1). CF(0) has three main subunits: a(1), b(2) and c(9-12). The alpha and beta chains form an alternating ring which encloses part of the gamma chain. CF(1) is attached to CF(0) by a central stalk formed by the gamma and epsilon chains, while a peripheral stalk is formed by the delta and b chains.

The protein localises to the cell inner membrane. It catalyses the reaction ATP + H2O + 4 H(+)(in) = ADP + phosphate + 5 H(+)(out). Its function is as follows. Produces ATP from ADP in the presence of a proton gradient across the membrane. The catalytic sites are hosted primarily by the beta subunits. This chain is ATP synthase subunit beta, found in Neisseria meningitidis serogroup A / serotype 4A (strain DSM 15465 / Z2491).